The sequence spans 749 residues: Cytosolic phospholipase A2 (749 aa).

The phospholipid binding stretch occupies residues 1–178; that stretch reads MSFIDPYQHI…MKKLLGPKKS (178 aa). Phosphoserine is present on serine 2. Residues 6 to 122 form the C2 domain; sequence PYQHIIVEHQ…KVGEKKEVPF (117 aa). Ca(2+) is bound by residues aspartate 40, threonine 41, aspartate 43, asparagine 65, aspartate 93, alanine 94, and asparagine 95. The PLA2c domain occupies 140–740; that stretch reads SCPDLRFSMA…SNVEARRFFN (601 aa). The active-site Nucleophile is the serine 228. Threonine 268 carries the post-translational modification Phosphothreonine. Residues 427–456 are disordered; it reads KHIVSNDSSDSDDESQEPKGTENEDAERDY. Phosphoserine occurs at positions 434, 435, and 437. The residue at position 505 (serine 505) is a Phosphoserine; by MAPK. Serine 515 is modified (phosphoserine). A Glycyl lysine isopeptide (Lys-Gly) (interchain with G-Cter in SUMO2) cross-link involves residue lysine 541. Catalysis depends on aspartate 549, which acts as the Proton acceptor. Residue lysine 606 forms a Glycyl lysine isopeptide (Lys-Gly) (interchain with G-Cter in SUMO2) linkage. Residues serine 727 and serine 729 each carry the phosphoserine modification.

Interacts with KAT5. Phosphorylated at both Ser-505 and Ser-727 in response to mitogenic stimuli.

It localises to the cytoplasm. Its subcellular location is the golgi apparatus membrane. The protein resides in the nucleus envelope. The catalysed reaction is a 1,2-diacyl-sn-glycero-3-phosphocholine + H2O = a 1-acyl-sn-glycero-3-phosphocholine + a fatty acid + H(+). It carries out the reaction a 1-O-alkyl-2-acyl-sn-glycero-3-phosphocholine + H2O = a 1-O-alkyl-sn-glycero-3-phosphocholine + a fatty acid + H(+). It catalyses the reaction a 1-acyl-sn-glycero-3-phosphocholine + H2O = sn-glycerol 3-phosphocholine + a fatty acid + H(+). The enzyme catalyses 1-hexadecanoyl-2-(5Z,8Z,11Z,14Z-eicosatetraenoyl)-sn-glycero-3-phosphocholine + H2O = 1-hexadecanoyl-sn-glycero-3-phosphocholine + (5Z,8Z,11Z,14Z)-eicosatetraenoate + H(+). The catalysed reaction is 1,2-di-(5Z,8Z,11Z,14Z-eicosatetraenoyl)-sn-glycero-3-phosphocholine + H2O = 1-(5Z,8Z,11Z,14Z-eicosatetraenoyl)-sn-glycero-3-phosphocholine + (5Z,8Z,11Z,14Z)-eicosatetraenoate + H(+). It carries out the reaction 1-octadecanoyl-2-(5Z,8Z,11Z,14Z-eicosatetraenoyl)-sn-glycero-3-phosphocholine + H2O = 1-octadecanoyl-sn-glycero-3-phosphocholine + (5Z,8Z,11Z,14Z)-eicosatetraenoate + H(+). It catalyses the reaction 1-hexadecanoyl-2-(9Z,12Z-octadecadienoyl)-sn-glycero-3-phosphocholine + H2O = (9Z,12Z)-octadecadienoate + 1-hexadecanoyl-sn-glycero-3-phosphocholine + H(+). The enzyme catalyses 1-octadecanoyl-2-(9Z,12Z,15Z-octadecatrienoyl)-sn-glycero-3-phosphocholine + H2O = (9Z,12Z,15Z)-octadecatrienoate + 1-octadecanoyl-sn-glycero-3-phosphocholine + H(+). The catalysed reaction is 1-(5Z,8Z,11Z,14Z-eicosatetraenoyl)-2-hexadecanoyl-sn-glycero-3-phosphocholine + H2O = 1-(5Z,8Z,11Z,14Z-eicosatetraenoyl)-sn-glycero-3-phosphocholine + hexadecanoate + H(+). It carries out the reaction 1-O-hexadecyl-2-(5Z,8Z,11Z,14Z)-eicosatetraenoyl-sn-glycero-3-phosphocholine + H2O = 1-O-hexadecyl-sn-glycero-3-phosphocholine + (5Z,8Z,11Z,14Z)-eicosatetraenoate + H(+). It catalyses the reaction 1,2-di-(9Z-octadecenoyl)-sn-glycero-3-phospho-(1'-sn-glycerol) + H2O = 1-(9Z-octadecenoyl)-sn-glycero-3-phospho-(1'-sn-glycerol) + (9Z)-octadecenoate + H(+). The enzyme catalyses 1-octadecanoyl-2-(5Z,8Z,11Z,14Z-eicosatetraenoyl)-sn-glycero-3-phosphate + H2O = 1-octadecanoyl-sn-glycero-3-phosphate + (5Z,8Z,11Z,14Z)-eicosatetraenoate + H(+). The catalysed reaction is 1-hexadecanoyl-sn-glycero-3-phosphocholine + H2O = sn-glycerol 3-phosphocholine + hexadecanoate + H(+). It carries out the reaction 2-(prostaglandin E2)-sn-glycero-3-phosphoethanolamine + H2O = sn-glycero-3-phosphoethanolamine + prostaglandin E2 + H(+). It catalyses the reaction 2-[(15S)-hydroxy-(5Z,8Z,11Z,13E)-eicosatetraenoyl]-sn-glycero-3-phosphocholine + H2O = (15S)-hydroxy-(5Z,8Z,11Z,13E)-eicosatetraenoate + sn-glycerol 3-phosphocholine + H(+). The enzyme catalyses 2-[(15R)-hydroxy-(5Z,8Z,11Z,13E)-eicosatetraenoyl]-sn-glycero-3-phosphocholine + H2O = (15R)-hydroxy-(5Z,8Z,11Z,13E)-eicosatetraenoate + sn-glycerol 3-phosphocholine + H(+). The catalysed reaction is 2-(prostaglandin E2)-sn-glycero-3-phosphocholine + H2O = prostaglandin E2 + sn-glycerol 3-phosphocholine + H(+). It carries out the reaction 2-[(11R)-hydroxy-(5Z,8Z,12E,14Z)-eicosatetraenoyl]-sn-glycero-3-phosphocholine + H2O = (11R)-hydroxy-(5Z,8Z,12E,14Z)-eicosatetraenoate + sn-glycerol 3-phosphocholine + H(+). It catalyses the reaction 1-(5Z,8Z,11Z,14Z-eicosatetraenoyl)-2-O-hexadecyl-sn-glycero-3-phosphocholine + H2O = 2-O-hexadecyl-sn-glycero-3-phosphocholine + (5Z,8Z,11Z,14Z)-eicosatetraenoate + H(+). The enzyme catalyses 1-octadecanoyl-2-(5Z,8Z,11Z,14Z-eicosatetraenoyl)-sn-glycero-3-phosphocholine + glycerol = 1-(5Z,8Z,11Z,14Z-eicosatetraenoyl)-glycerol + 1-octadecanoyl-sn-glycero-3-phosphocholine. The catalysed reaction is 1-octadecanoyl-2-(9Z,12Z,15Z-octadecatrienoyl)-sn-glycero-3-phosphocholine + glycerol = 1-(9Z,12Z,15Z-octadecatrienoyl)-glycerol + 1-octadecanoyl-sn-glycero-3-phosphocholine. Its pathway is membrane lipid metabolism; glycerophospholipid metabolism. It participates in lipid metabolism; arachidonate metabolism. The protein operates within lipid metabolism; prostaglandin biosynthesis. It functions in the pathway lipid metabolism; leukotriene B4 biosynthesis. With respect to regulation, activated by cytosolic calcium, which is necessary for binding to membrane lipids. Activated by phosphorylation in response to mitogenic stimuli. In terms of biological role, has primarily calcium-dependent phospholipase and lysophospholipase activities, with a major role in membrane lipid remodeling and biosynthesis of lipid mediators of the inflammatory response. Plays an important role in embryo implantation and parturition through its ability to trigger prostanoid production. Preferentially hydrolyzes the ester bond of the fatty acyl group attached at sn-2 position of phospholipids (phospholipase A2 activity). Selectively hydrolyzes sn-2 arachidonoyl group from membrane phospholipids, providing the precursor for eicosanoid biosynthesis via the cyclooxygenase pathway. In an alternative pathway of eicosanoid biosynthesis, hydrolyzes sn-2 fatty acyl chain of eicosanoid lysophopholipids to release free bioactive eicosanoids. Hydrolyzes the ester bond of the fatty acyl group attached at sn-1 position of phospholipids (phospholipase A1 activity) only if an ether linkage rather than an ester linkage is present at the sn-2 position. This hydrolysis is not stereospecific. Has calcium-independent phospholipase A2 and lysophospholipase activities in the presence of phosphoinositides. Has O-acyltransferase activity. Catalyzes the transfer of fatty acyl chains from phospholipids to a primary hydroxyl group of glycerol (sn-1 or sn-3), potentially contributing to monoacylglycerol synthesis. The chain is Cytosolic phospholipase A2 (PLA2G4A) from Equus caballus (Horse).